We begin with the raw amino-acid sequence, 106 residues long: MTDKTITRAQLSEAVYQEVGLSRNESADLLEAVLDEISGALAKGDAVKISSFGSFSVRSKGQRIGRNPKTGEEVPITPRRVLVFRPSQLLKKKINDGMAAKRGGAK.

Belongs to the bacterial histone-like protein family. Heterodimer of an alpha and a beta chain.

This protein is one of the two subunits of integration host factor, a specific DNA-binding protein that functions in genetic recombination as well as in transcriptional and translational control. This chain is Integration host factor subunit alpha, found in Paramagnetospirillum magneticum (strain ATCC 700264 / AMB-1) (Magnetospirillum magneticum).